A 934-amino-acid chain; its full sequence is MSNSDIRSFFGGGNAQKKPKVSPTPTSPKPKRSLKKKRIVLSDDEDGTIENSKVPASKSKVQKRNESEDISHSLPSIVHEDDKLVGSDGVSTTPDEYFEQQSTRSRSKPRIISNKETTTSKDVVHPVKTENFANDLDTTSDSKPVVHQTRATRKPAQPKAEKSTTSKSKSHTTTATTHTSRSSKSKGLPRFSDEVSQALKNVPLIDVDSMGVMAPGTFYERAATTQTPGSKPVPEGNSDCLSGISFVITGILETLTRQEATDLIKQYGGKVTGAPSVRTDFILLGENAGPRKVETIKQHKIPAINEDGLFYLITHLPASGGTGAAAQAAQQKKEQEEKKILETVARMDDSNKKESQPSQIWTSKYAPTSLKDICGNKGVVQKLQKWLQDYHKNRKSNFNKPGPDGLGLYKAVLLSGPPGIGKTTAAHLVAKLEGYDVLELNASDTRSKRLLDEQLFGVTDSQSLAGYFGTKANPVDMAKSRLVLIMDEIDGMSSGDRGGVGQLNMIIKKSMIPIICICNDRAHPKLRPLDRTTFDLRFRRPDANSMRSRIMSIAYREGLKLSPQAVDQLVQGTQSDMRQIINLLSTYKLSCSEMTPQNSQAVIKNSEKHIVMKPWDICSRYLHGGMFHPSSKSTINDKLELYFNDHEFSYLMVQENYLNTTPDRIRQEPPKMSHLKHLELISSAANSFSDSDLVDSMIHGPQQHWSLMPTHALMSCVRPASFVAGSGSRQIRFTNWLGNNSKTNKLYRMLREIQVHMRLKVSANKLDLRQHYIPILYESLPVKLSTGHSDVVPEIIELMDEYYLNREDFDSITELVLPADAGEKLMKTIPTAAKSAFTRKYNSSSHPIAFFGSSDVLPMKGSAQREVPDVEDAIEAEDEMLEEASDSEAANEEDIDLSKDKFISVPKKPKKRTKAKAEASSSSSTSRRSRKKTA.

The interval 1-190 (MSNSDIRSFF…RSSKSKGLPR (190 aa)) is disordered. At Ser27 the chain carries Phosphoserine. Over residues 29–39 (KPKRSLKKKRI) the composition is skewed to basic residues. Residues 89-104 (GVSTTPDEYFEQQSTR) are compositionally biased toward polar residues. Residues 118 to 128 (TTSKDVVHPVK) show a composition bias toward basic and acidic residues. A compositionally biased stretch (low complexity) spans 165-186 (TSKSKSHTTTATTHTSRSSKSK). The 91-residue stretch at 236–326 (GNSDCLSGIS…PASGGTGAAA (91 aa)) folds into the BRCT domain. ATP contacts are provided by residues Thr362, Cys374, 416-423 (GPPGIGKT), and Asn519. Residues 876 to 895 (AEDEMLEEASDSEAANEEDI) show a composition bias toward acidic residues. A disordered region spans residues 876-934 (AEDEMLEEASDSEAANEEDIDLSKDKFISVPKKPKKRTKAKAEASSSSSTSRRSRKKTA).

The protein belongs to the activator 1 large subunit family. Heteropentamer of subunits rfc1, rfc2, rfc3, rfc4 and rfc5 that forms a complex (RFC) with PCNA in the presence of ATP. Interacts with cdc24.

It localises to the nucleus. The protein resides in the nucleolus. Its function is as follows. The elongation of primed DNA templates by DNA polymerase delta and epsilon requires the action of the accessory proteins PCNA and activator 1. Subunit 1 is essential for cell cycle progression. It may associate with components of the DNA replication machinery and serve to enhance the efficiency of DNA replication. The sequence is that of Replication factor C subunit 1 (rfc1) from Schizosaccharomyces pombe (strain 972 / ATCC 24843) (Fission yeast).